A 182-amino-acid polypeptide reads, in one-letter code: RSCEICHNLGKDCEGYSTECDSPEDQCGMVLLEVSPAPISFRTVHRNCFSSSLCKLEQFDVNLGHDAYFRGRIHCCEEEKCEVNSFPGLPFSQLNGYSCPGVLGLFSEDSSEHEALCRGTETKCIEIVGYRKERFPGDIAYNIKGCTSSCPVLRLSNRTHEANRNDLIKVACTDASKTTPSE.

Intrachain disulfides connect Cys-3–Cys-27, Cys-6–Cys-13, Cys-20–Cys-48, Cys-54–Cys-75, Cys-76–Cys-81, Cys-99–Cys-124, Cys-117–Cys-146, and Cys-150–Cys-172. A glycan (N-linked (GlcNAc...) asparagine) is linked at Asn-157.

The protein belongs to the CNF-like-inhibitor family. In terms of assembly, heterodimer of subunit A and subunit B.

The protein resides in the secreted. In terms of biological role, phospholipase A2 (PA2) inhibitor. Inhibits the enzymatic activity of PA2 of Deinagkistrodon acutus. Also shows a wide anti-hemorrhage activities to D.acutus, Naja atra and Agkistrodon halys venom. The native protein is more potent than the recombinant one. This is Phospholipase A2 inhibitor gamma subunit A2 from Trimerodytes annularis (Red-bellied annulate keelback).